The sequence spans 111 residues: Ig kappa chain V-III region MOPC 70 (111 aa).

The segment at 1–23 is framework-1; the sequence is DIVLTQSPASLAVSLGQRATISC. Residues C23 and C92 are joined by a disulfide bond. The interval 24–38 is complementarity-determining-1; it reads RASESVDNSGISFMN. Residues 39 to 53 are framework-2; sequence WFQQKPGQPPKLLIY. The interval 54–60 is complementarity-determining-2; sequence AASNQGS. The interval 61-92 is framework-3; it reads GVPARFSGSGSGTDFSLNIHPMEEDDTAMYFC. Residues 93–101 are complementarity-determining-3; it reads QQSKEVPWT. Positions 102 to 111 are framework-4; the sequence is FGGGTKLEIK.

The chain is Ig kappa chain V-III region MOPC 70 from Mus musculus (Mouse).